We begin with the raw amino-acid sequence, 586 residues long: Phosphomethylpyrimidine synthase (586 aa).

The disordered stretch occupies residues 1 to 59 (MKQSVSAEQIELKSSLPGSKKVYVDGPREGMKVPMREIEQSETNGVPNPPIRVYDTSGP). Residues 22-39 (VYVDGPREGMKVPMREIE) show a composition bias toward basic and acidic residues. Substrate contacts are provided by residues Asn-193, Met-222, Tyr-251, His-287, 307–309 (SRG), 348–351 (DGLR), and Glu-387. Residue His-391 participates in Zn(2+) binding. Residue Tyr-414 coordinates substrate. His-455 contributes to the Zn(2+) binding site. [4Fe-4S] cluster is bound by residues Cys-535, Cys-538, and Cys-543.

This sequence belongs to the ThiC family. It depends on [4Fe-4S] cluster as a cofactor.

The enzyme catalyses 5-amino-1-(5-phospho-beta-D-ribosyl)imidazole + S-adenosyl-L-methionine = 4-amino-2-methyl-5-(phosphooxymethyl)pyrimidine + CO + 5'-deoxyadenosine + formate + L-methionine + 3 H(+). It functions in the pathway cofactor biosynthesis; thiamine diphosphate biosynthesis. Functionally, catalyzes the synthesis of the hydroxymethylpyrimidine phosphate (HMP-P) moiety of thiamine from aminoimidazole ribotide (AIR) in a radical S-adenosyl-L-methionine (SAM)-dependent reaction. The sequence is that of Phosphomethylpyrimidine synthase from Bacillus cereus (strain ATCC 14579 / DSM 31 / CCUG 7414 / JCM 2152 / NBRC 15305 / NCIMB 9373 / NCTC 2599 / NRRL B-3711).